We begin with the raw amino-acid sequence, 387 residues long: 3-ketoacyl-CoA thiolase (387 aa).

Residue C91 is the Acyl-thioester intermediate of the active site. Active-site proton acceptor residues include H343 and C373.

This sequence belongs to the thiolase-like superfamily. Thiolase family. Heterotetramer of two alpha chains (FadB) and two beta chains (FadA).

Its subcellular location is the cytoplasm. The catalysed reaction is an acyl-CoA + acetyl-CoA = a 3-oxoacyl-CoA + CoA. Its pathway is lipid metabolism; fatty acid beta-oxidation. In terms of biological role, catalyzes the final step of fatty acid oxidation in which acetyl-CoA is released and the CoA ester of a fatty acid two carbons shorter is formed. In Aliivibrio fischeri (strain ATCC 700601 / ES114) (Vibrio fischeri), this protein is 3-ketoacyl-CoA thiolase.